A 304-amino-acid chain; its full sequence is Acetaldehyde dehydrogenase (304 aa).

The Acyl-thioester intermediate role is filled by Cys131. NAD(+) is bound by residues 162-170 (SAGPGTRKN) and Asn273.

The protein belongs to the acetaldehyde dehydrogenase family.

It catalyses the reaction acetaldehyde + NAD(+) + CoA = acetyl-CoA + NADH + H(+). This is Acetaldehyde dehydrogenase from Polaromonas naphthalenivorans (strain CJ2).